A 123-amino-acid polypeptide reads, in one-letter code: Large ribosomal subunit protein bL12 (123 aa).

It belongs to the bacterial ribosomal protein bL12 family. As to quaternary structure, homodimer. Part of the ribosomal stalk of the 50S ribosomal subunit. Forms a multimeric L10(L12)X complex, where L10 forms an elongated spine to which 2 to 4 L12 dimers bind in a sequential fashion. Binds GTP-bound translation factors.

Functionally, forms part of the ribosomal stalk which helps the ribosome interact with GTP-bound translation factors. Is thus essential for accurate translation. The polypeptide is Large ribosomal subunit protein bL12 (Albidiferax ferrireducens (strain ATCC BAA-621 / DSM 15236 / T118) (Rhodoferax ferrireducens)).